Here is a 371-residue protein sequence, read N- to C-terminus: Ligninase LG5 (371 aa).

An N-terminal signal peptide occupies residues 1-21 (MAFKKLLAVLTAALSLRAAQG). The propeptide occupies 22–27 (AAVEKR). 4 disulfides stabilise this stretch: Cys-30–Cys-42, Cys-41–Cys-311, Cys-61–Cys-146, and Cys-275–Cys-344. The Proton acceptor role is filled by His-74. Ca(2+) contacts are provided by Asp-75, Gly-92, Asp-94, and Ser-96. His-202 is a heme b binding site. The Ca(2+) site is built by Ser-203, Asp-220, Thr-222, Ile-225, and Asp-227. A glycan (N-linked (GlcNAc...) asparagine) is linked at Asn-283. Residues 349-371 (FPTLSTLPGPATSVARIPPPPGA) form a disordered region.

This sequence belongs to the peroxidase family. Ligninase subfamily. Ca(2+) serves as cofactor. It depends on heme b as a cofactor.

The catalysed reaction is 1-(3,4-dimethoxyphenyl)-2-(2-methoxyphenoxy)propane-1,3-diol + H2O2 = 3,4-dimethoxybenzaldehyde + guaiacol + glycolaldehyde + H2O. It catalyses the reaction 2 (3,4-dimethoxyphenyl)methanol + H2O2 = 2 (3,4-dimethoxyphenyl)methanol radical + 2 H2O. It functions in the pathway secondary metabolite metabolism; lignin degradation. In terms of biological role, depolymerization of lignin. Catalyzes the C(alpha)-C(beta) cleavage of the propyl side chains of lignin. The protein is Ligninase LG5 (GLG5) of Phanerodontia chrysosporium (White-rot fungus).